We begin with the raw amino-acid sequence, 436 residues long: GTPase Der (436 aa).

2 EngA-type G domains span residues 3 to 168 and 177 to 352; these read PLVA…EEKS and IRLA…EQRS. Residues 9-16, 56-60, 120-123, 183-190, 230-234, and 295-298 contribute to the GTP site; these read GRPNVGKS, DTGGY, NKVE, DTAGL, and NKWD. In terms of domain architecture, KH-like spans 353–436; the sequence is QQITTSDLNR…VPFSLRFMQK (84 aa).

This sequence belongs to the TRAFAC class TrmE-Era-EngA-EngB-Septin-like GTPase superfamily. EngA (Der) GTPase family. As to quaternary structure, associates with the 50S ribosomal subunit.

GTPase that plays an essential role in the late steps of ribosome biogenesis. The chain is GTPase Der from Prosthecochloris aestuarii (strain DSM 271 / SK 413).